The following is a 1969-amino-acid chain: Echinoderm microtubule-associated protein-like 5 (1969 aa).

WD repeat units lie at residues 59 to 100 (GHSD…TISV), 104 to 145 (VHTH…MLSM), 148 to 187 (GHTD…LTPK), 195 to 233 (GDLQ…RTIQ), 235 to 273 (AHAA…TVID), 280 to 321 (GYKG…LIMQ), 323 to 362 (HCEG…LIAR), 406 to 445 (DRKE…KKVG), 449 to 488 (GSLS…EVTS), and 561 to 601 (GHSA…KLKD). Residues 609 to 633 (ESLADSHSDESDSDLSDVPELDSEI) are disordered. A compositionally biased stretch (acidic residues) spans 619-633 (SDSDLSDVPELDSEI). 9 WD repeats span residues 725–766 (GHDD…PLSI), 770–811 (HHQY…KLSI), 814–853 (GSKD…LIGR), 861–900 (GKND…KTVK), 901–940 (AHDG…KTYA), 996–1035 (HMEG…CMLA), 1038–1077 (KLKK…DLVS), 1080–1120 (HRKD…RVGI), and 1236–1276 (AHST…YREK). 2 disordered regions span residues 1274-1297 (REKR…YDSD) and 1326-1355 (QQKE…NVGK). The span at 1281 to 1294 (SEESDIDSEEDGGY) shows a compositional bias: acidic residues. Basic and acidic residues predominate over residues 1326-1337 (QQKEPSIDERPP). WD repeat units lie at residues 1412-1463 (EHND…TLSI), 1467-1508 (YHSK…KIAS), 1511-1550 (GHNQ…LLSK), 1560-1598 (ARMQ…RIVA), 1600-1646 (AHNG…RAFR), 1691-1731 (GHVD…MLNK), 1733-1774 (NLGH…GKKR), 1775-1814 (DRRC…TLNR), 1887-1926 (AEKA…KFAK), and 1932-1969 (GHSP…HTPH).

This sequence belongs to the WD repeat EMAP family.

It localises to the cytoplasm. It is found in the cytoskeleton. May modify the assembly dynamics of microtubules, such that microtubules are slightly longer, but more dynamic. The chain is Echinoderm microtubule-associated protein-like 5 (EML5) from Homo sapiens (Human).